Reading from the N-terminus, the 429-residue chain is Kynureninase (429 aa).

Pyridoxal 5'-phosphate-binding positions include leucine 109, threonine 110, 137 to 140 (FPSD), aspartate 222, histidine 225, and tyrosine 247. N6-(pyridoxal phosphate)lysine is present on lysine 248. Pyridoxal 5'-phosphate contacts are provided by tryptophan 278 and asparagine 306.

It belongs to the kynureninase family. In terms of assembly, homodimer. Requires pyridoxal 5'-phosphate as cofactor.

It carries out the reaction L-kynurenine + H2O = anthranilate + L-alanine + H(+). It catalyses the reaction 3-hydroxy-L-kynurenine + H2O = 3-hydroxyanthranilate + L-alanine + H(+). Its pathway is amino-acid degradation; L-kynurenine degradation; L-alanine and anthranilate from L-kynurenine: step 1/1. It functions in the pathway cofactor biosynthesis; NAD(+) biosynthesis; quinolinate from L-kynurenine: step 2/3. In terms of biological role, catalyzes the cleavage of L-kynurenine (L-Kyn) and L-3-hydroxykynurenine (L-3OHKyn) into anthranilic acid (AA) and 3-hydroxyanthranilic acid (3-OHAA), respectively. The polypeptide is Kynureninase (Salinispora tropica (strain ATCC BAA-916 / DSM 44818 / JCM 13857 / NBRC 105044 / CNB-440)).